Here is a 248-residue protein sequence, read N- to C-terminus: Tyrosine recombinase XerD-like (248 aa).

The Core-binding (CB) domain occupies 1 to 72; it reads MIAFIEPFLA…TVNQFLYYLY (72 aa). Positions 92 to 248 constitute a Tyr recombinase domain; sequence SLKPQLTRLD…PITLEKYYKM (157 aa). Arg213 is an active-site residue. Tyr245 serves as the catalytic O-(3'-phospho-DNA)-tyrosine intermediate.

Belongs to the 'phage' integrase family. XerD-like subfamily.

It is found in the cytoplasm. Putative tyrosine recombinase. Not involved in the cutting and rejoining of the recombining DNA molecules on dif(SL) site. The sequence is that of Tyrosine recombinase XerD-like from Streptococcus equi subsp. zooepidemicus (strain MGCS10565).